An 80-amino-acid polypeptide reads, in one-letter code: Regulatory protein HrpD6 (80 aa).

Functionally, involved in the regulation of several genes of the hrp-hrc-hpa cluster, which encodes a type III secretion system (T3SS). Upregulates the expression of hpa2, hpa1 and hpaB and partially controls the expression of hrcC and hrcT. Controls the secretion of the T3SS TAL effector AvrXa27. Also regulates the expression of several HrpX-regulated protein (Xrp) genes. Has no influence on hrpG or hrpX expression. The sequence is that of Regulatory protein HrpD6 from Xanthomonas oryzae pv. oryzicola.